Consider the following 278-residue polypeptide: Acyl-[acyl-carrier-protein]--UDP-N-acetylglucosamine O-acyltransferase (278 aa).

The protein belongs to the transferase hexapeptide repeat family. LpxA subfamily. Homotrimer.

The protein resides in the cytoplasm. The enzyme catalyses a (3R)-hydroxyacyl-[ACP] + UDP-N-acetyl-alpha-D-glucosamine = a UDP-3-O-[(3R)-3-hydroxyacyl]-N-acetyl-alpha-D-glucosamine + holo-[ACP]. The protein operates within glycolipid biosynthesis; lipid IV(A) biosynthesis; lipid IV(A) from (3R)-3-hydroxytetradecanoyl-[acyl-carrier-protein] and UDP-N-acetyl-alpha-D-glucosamine: step 1/6. In terms of biological role, involved in the biosynthesis of lipid A, a phosphorylated glycolipid that anchors the lipopolysaccharide to the outer membrane of the cell. The polypeptide is Acyl-[acyl-carrier-protein]--UDP-N-acetylglucosamine O-acyltransferase (Brucella abortus (strain S19)).